The primary structure comprises 256 residues: Homeobox protein ceh-34 (256 aa).

The segment at residues 134–193 (GEETNYCFKSKSRNVLRDAYKKCQYPSVEDKRRLAQQTELSIIQVSNWFKNKRQRERAAG) is a DNA-binding region (homeobox). Residues 187–233 (QRERAAGQLDRSSARSNDSDDGSSGCESKPPMNIDSPAPPPLPTSFD) are disordered.

Belongs to the SIX/Sine oculis homeobox family. In terms of assembly, interacts (via N-terminus) with eya-1 (via C-terminus). As to expression, shows expression only in the pharyngeal nervous system.

It is found in the nucleus. Its function is as follows. Acts as a transcription regulator. Binds to the sequence motif 5'-TCAGGTT-3'. Binds to the cis-regulatory element of proapoptotic factor egl-1 gene and together with eya-1 activates egl-1 expression to promote motor neuron M4 sister cell apoptosis. Also promotes apoptosis of I1 pharyngeal neuron sister cell. Together with eya-1, required to specify the coelomocyte fate in embryonic and postembryonic precursors. Required to establish and maintain the differentiation of all 14 classes of pharyngeal neurons. Controls the neurotransmitter signaling capacity of the neurons and is required for the expression of some neurotransmitter receptors including mgl-1, glr-2 and ser-7. Affects the neuropeptidergic identity of pharyngeal neurons. Required for the pharyngeal expression of sensory receptors gur-3, glu-7 and str-97, antimicrobial defense genes such as spp-12, gpla-1/flr-2 and htrl-1, and pan-pharyngeal nervous system genes such as kin-36. Required to establish and maintain pharyngeal nervous system architecture by ensuring correct axon and synapse organization. Required for expression of eya-1 which may act as a transcriptional cofactor to specify distinct pharyngeal neuron types. Cooperates with several homeobox proteins to specify distinct pharyngeal neuron types including unc-86 in the NSM and I1 neurons, ceh-14 in the I2 neuron, ceh-2 and pros-1 in the I3 neuron, ceh-45 in the M1 neuron, ceh-2 in the M3 neuron, ceh-28 and zag-1 in the M4 neuron, and vab-15 in the M5 neuron. The polypeptide is Homeobox protein ceh-34 (ceh-34) (Caenorhabditis elegans).